We begin with the raw amino-acid sequence, 455 residues long: uncharacterized protein (455 aa).

The N-terminal stretch at 1-27 is a signal peptide; sequence MSQRQQFQFLLSFLILIFLKFIIQIRC. The Extracellular segment spans residues 29-434; the sequence is ESNGVIIIKN…GDDENLINSS (406 aa). N-linked (GlcNAc...) asparagine glycans are attached at residues Asn-136, Asn-148, Asn-210, and Asn-298. Residues 383–402 form a disordered region; that stretch reads SSSTTSTTSSSSSSSSSTTT. 2 N-linked (GlcNAc...) asparagine glycosylation sites follow: Asn-421 and Asn-432. A helical transmembrane segment spans residues 435–455; sequence SVIKFSTPIIMIIIILINIKF.

It is found in the membrane. This is an uncharacterized protein from Dictyostelium discoideum (Social amoeba).